The following is a 267-amino-acid chain: Putative N-acetylmuramoyl-L-alanine amidase RC0497 (267 aa).

A disordered region spans residues 1-25; it reads MSKSKAIENNGISNTNSPNGKYMAP. Residues 10–19 are compositionally biased toward polar residues; the sequence is NGISNTNSPN. An N-acetylmuramoyl-L-alanine amidase domain is found at 33–141; the sequence is TCVVITYSVS…NLDLKHDLVG (109 aa).

Belongs to the N-acetylmuramoyl-L-alanine amidase 2 family.

It localises to the secreted. The enzyme catalyses Hydrolyzes the link between N-acetylmuramoyl residues and L-amino acid residues in certain cell-wall glycopeptides.. The polypeptide is Putative N-acetylmuramoyl-L-alanine amidase RC0497 (Rickettsia conorii (strain ATCC VR-613 / Malish 7)).